A 483-amino-acid chain; its full sequence is Isocitrate dehydrogenase [NADP] (483 aa).

An NADP(+)-binding site is contributed by T74. D-threo-isocitrate contacts are provided by S83, N85, R89, R99, and R121. D232 contributes to the Mg(2+) binding site. NADP(+)-binding positions include 264 to 270 and N277; that span reads HGSAPDI.

It belongs to the isocitrate and isopropylmalate dehydrogenases family. As to quaternary structure, homodimer. Requires Mg(2+) as cofactor. Mn(2+) is required as a cofactor.

The enzyme catalyses D-threo-isocitrate + NADP(+) = 2-oxoglutarate + CO2 + NADPH. Catalyzes the oxidative decarboxylation of isocitrate to 2-oxoglutarate and carbon dioxide with the concomitant reduction of NADP(+). The polypeptide is Isocitrate dehydrogenase [NADP] (icd) (Rickettsia typhi (strain ATCC VR-144 / Wilmington)).